A 338-amino-acid chain; its full sequence is Large ribosomal subunit protein uL10 (338 aa).

Residues 292-338 (LDDDLKERVSSTASAVEAKEEEAPKEEKEEEKEEEEEAPAAGLGMLF) are disordered. The segment covering 308-318 (EAKEEEAPKEE) has biased composition (basic and acidic residues). Over residues 319–329 (KEEEKEEEEEA) the composition is skewed to acidic residues.

The protein belongs to the universal ribosomal protein uL10 family. As to quaternary structure, part of the 50S ribosomal subunit. Forms part of the ribosomal stalk which helps the ribosome interact with GTP-bound translation factors. Forms a heptameric L10(L12)2(L12)2(L12)2 complex, where L10 forms an elongated spine to which the L12 dimers bind in a sequential fashion.

Functionally, forms part of the ribosomal stalk, playing a central role in the interaction of the ribosome with GTP-bound translation factors. The protein is Large ribosomal subunit protein uL10 of Methanococcus aeolicus (strain ATCC BAA-1280 / DSM 17508 / OCM 812 / Nankai-3).